Here is a 386-residue protein sequence, read N- to C-terminus: Acetylornithine aminotransferase (386 aa).

Pyridoxal 5'-phosphate contacts are provided by residues 94–95 and phenylalanine 121; that span reads GT. Arginine 124 is a binding site for N(2)-acetyl-L-ornithine. Position 206 to 209 (206 to 209) interacts with pyridoxal 5'-phosphate; it reads DEVQ. Lysine 235 carries the N6-(pyridoxal phosphate)lysine modification. Serine 263 provides a ligand contact to N(2)-acetyl-L-ornithine. Threonine 264 serves as a coordination point for pyridoxal 5'-phosphate.

It belongs to the class-III pyridoxal-phosphate-dependent aminotransferase family. ArgD subfamily. As to quaternary structure, homodimer. Pyridoxal 5'-phosphate serves as cofactor.

It localises to the cytoplasm. It carries out the reaction N(2)-acetyl-L-ornithine + 2-oxoglutarate = N-acetyl-L-glutamate 5-semialdehyde + L-glutamate. The protein operates within amino-acid biosynthesis; L-arginine biosynthesis; N(2)-acetyl-L-ornithine from L-glutamate: step 4/4. The sequence is that of Acetylornithine aminotransferase from Listeria monocytogenes serovar 1/2a (strain ATCC BAA-679 / EGD-e).